A 652-amino-acid chain; its full sequence is DNA ligase (652 aa).

NAD(+) contacts are provided by residues 29 to 33 (DSEYD), 78 to 79 (SL), and glutamate 107. The active-site N6-AMP-lysine intermediate is lysine 109. Arginine 130, glutamate 164, lysine 278, and lysine 302 together coordinate NAD(+). Zn(2+)-binding residues include cysteine 395, cysteine 398, cysteine 413, and cysteine 418. Positions 577-652 (VADAALSGLT…VRDEAWLESL (76 aa)) constitute a BRCT domain.

The protein belongs to the NAD-dependent DNA ligase family. LigA subfamily. Mg(2+) serves as cofactor. The cofactor is Mn(2+).

The enzyme catalyses NAD(+) + (deoxyribonucleotide)n-3'-hydroxyl + 5'-phospho-(deoxyribonucleotide)m = (deoxyribonucleotide)n+m + AMP + beta-nicotinamide D-nucleotide.. In terms of biological role, DNA ligase that catalyzes the formation of phosphodiester linkages between 5'-phosphoryl and 3'-hydroxyl groups in double-stranded DNA using NAD as a coenzyme and as the energy source for the reaction. It is essential for DNA replication and repair of damaged DNA. In Streptococcus pneumoniae (strain JJA), this protein is DNA ligase.